The chain runs to 529 residues: CTP synthase (529 aa).

The interval M1–L270 is amidoligase domain. S12 is a binding site for CTP. S12 provides a ligand contact to UTP. ATP contacts are provided by residues G13–I18 and D70. Mg(2+) is bound by residues D70 and E145. CTP contacts are provided by residues D152 to E154, K191 to Q196, and K227. Residues K191–Q196 and K227 each bind UTP. K243 to A245 provides a ligand contact to ATP. The Glutamine amidotransferase type-1 domain occupies V293–S525. L-glutamine is bound at residue G349. The Nucleophile; for glutamine hydrolysis role is filled by C376. Residues L377–Q380, E400, and R455 contribute to the L-glutamine site. Catalysis depends on residues H498 and E500.

Belongs to the CTP synthase family. In terms of assembly, homotetramer.

It catalyses the reaction UTP + L-glutamine + ATP + H2O = CTP + L-glutamate + ADP + phosphate + 2 H(+). The catalysed reaction is L-glutamine + H2O = L-glutamate + NH4(+). It carries out the reaction UTP + NH4(+) + ATP = CTP + ADP + phosphate + 2 H(+). Its pathway is pyrimidine metabolism; CTP biosynthesis via de novo pathway; CTP from UDP: step 2/2. Allosterically activated by GTP, when glutamine is the substrate; GTP has no effect on the reaction when ammonia is the substrate. The allosteric effector GTP functions by stabilizing the protein conformation that binds the tetrahedral intermediate(s) formed during glutamine hydrolysis. Inhibited by the product CTP, via allosteric rather than competitive inhibition. Its function is as follows. Catalyzes the ATP-dependent amination of UTP to CTP with either L-glutamine or ammonia as the source of nitrogen. Regulates intracellular CTP levels through interactions with the four ribonucleotide triphosphates. This is CTP synthase from Methanoculleus marisnigri (strain ATCC 35101 / DSM 1498 / JR1).